Consider the following 98-residue polypeptide: Large ribosomal subunit protein uL23 (98 aa).

It belongs to the universal ribosomal protein uL23 family. Part of the 50S ribosomal subunit. Contacts protein L29, and trigger factor when it is bound to the ribosome.

One of the early assembly proteins it binds 23S rRNA. One of the proteins that surrounds the polypeptide exit tunnel on the outside of the ribosome. Forms the main docking site for trigger factor binding to the ribosome. In Clostridium acetobutylicum (strain ATCC 824 / DSM 792 / JCM 1419 / IAM 19013 / LMG 5710 / NBRC 13948 / NRRL B-527 / VKM B-1787 / 2291 / W), this protein is Large ribosomal subunit protein uL23.